Reading from the N-terminus, the 1464-residue chain is DNA polymerase III PolC-type (1464 aa).

The Exonuclease domain maps to 426-582; that stretch reads YVVFDVETTG…YDAEATGRLL (157 aa).

Belongs to the DNA polymerase type-C family. PolC subfamily.

The protein resides in the cytoplasm. The enzyme catalyses DNA(n) + a 2'-deoxyribonucleoside 5'-triphosphate = DNA(n+1) + diphosphate. Functionally, required for replicative DNA synthesis. This DNA polymerase also exhibits 3' to 5' exonuclease activity. The protein is DNA polymerase III PolC-type of Streptococcus thermophilus (strain CNRZ 1066).